The sequence spans 163 residues: MMNRVMHYFKSLLLLELLAGLWLTLKYTFRPKYTVLYPMEKFPQSPRFRGLHALRRYPNGEERCIACKLCEAVCPALAITIDSAKREDGTRRTTRYDIDLFKCIFCGFCEESCPVDSIVETHILEYHFEKRGENIVTKPQLLAIGDRFEAEIAERRAADAAFR.

4Fe-4S ferredoxin-type domains follow at residues 54–84 and 94–123; these read LRRYPNGEERCIACKLCEAVCPALAITIDSA and TRYDIDLFKCIFCGFCEESCPVDSIVETHI. Positions 64, 67, 70, 74, 103, 106, 109, and 113 each coordinate [4Fe-4S] cluster.

The protein belongs to the complex I 23 kDa subunit family. As to quaternary structure, NDH-1 is composed of 14 different subunits. Subunits NuoA, H, J, K, L, M, N constitute the membrane sector of the complex. [4Fe-4S] cluster is required as a cofactor.

The protein localises to the cell inner membrane. It carries out the reaction a quinone + NADH + 5 H(+)(in) = a quinol + NAD(+) + 4 H(+)(out). Its function is as follows. NDH-1 shuttles electrons from NADH, via FMN and iron-sulfur (Fe-S) centers, to quinones in the respiratory chain. The immediate electron acceptor for the enzyme in this species is believed to be ubiquinone. Couples the redox reaction to proton translocation (for every two electrons transferred, four hydrogen ions are translocated across the cytoplasmic membrane), and thus conserves the redox energy in a proton gradient. This chain is NADH-quinone oxidoreductase subunit I, found in Xylella fastidiosa (strain 9a5c).